The chain runs to 147 residues: Transcriptional regulator FurA (147 aa).

A DNA-binding region spans residues 1 to 85; it reads MSSIPDYAEQ…GSVARYESRV (85 aa). Zn(2+) is bound by residues H34 and E82. Positions 86–147 are dimerization; it reads GDNHHHIVCR…SISDTSRSHP (62 aa). D87 and H89 together coordinate Fe cation. The Zn(2+) site is built by H91, C94, C97, and D102. Residue E109 coordinates Fe cation.

It belongs to the Fur family. In terms of assembly, homodimer.

The protein localises to the cytoplasm. Its function is as follows. Represses transcription of the catalase-peroxidase gene katG and its own transcription by binding to the promoter region in a redox-dependent manner. This is Transcriptional regulator FurA (furA) from Mycobacterium bovis (strain ATCC BAA-935 / AF2122/97).